A 106-amino-acid polypeptide reads, in one-letter code: ATP-dependent Clp protease adapter protein ClpS (106 aa).

The protein belongs to the ClpS family. In terms of assembly, binds to the N-terminal domain of the chaperone ClpA.

Its function is as follows. Involved in the modulation of the specificity of the ClpAP-mediated ATP-dependent protein degradation. This Edwardsiella ictaluri (strain 93-146) protein is ATP-dependent Clp protease adapter protein ClpS.